The chain runs to 184 residues: Large ribosomal subunit protein uL6 (184 aa).

The protein belongs to the universal ribosomal protein uL6 family. Part of the 50S ribosomal subunit.

This protein binds to the 23S rRNA, and is important in its secondary structure. It is located near the subunit interface in the base of the L7/L12 stalk, and near the tRNA binding site of the peptidyltransferase center. This is Large ribosomal subunit protein uL6 from Fervidobacterium nodosum (strain ATCC 35602 / DSM 5306 / Rt17-B1).